Here is a 192-residue protein sequence, read N- to C-terminus: Ion-translocating oxidoreductase complex subunit A (192 aa).

6 consecutive transmembrane segments (helical) span residues 5-25, 39-59, 65-85, 102-122, 134-154, and 171-191; these read ALIL…FLGL, TGMG…SYLV, APLG…AAVV, VLGI…VALL, ALYG…FASI, and AIAL…IGLV.

It belongs to the NqrDE/RnfAE family. In terms of assembly, the complex is composed of six subunits: RnfA, RnfB, RnfC, RnfD, RnfE and RnfG.

It localises to the cell inner membrane. Part of a membrane-bound complex that couples electron transfer with translocation of ions across the membrane. The protein is Ion-translocating oxidoreductase complex subunit A of Thioalkalivibrio sulfidiphilus (strain HL-EbGR7).